The chain runs to 309 residues: MPIRVPDELPAVSFLRNENVFVMTSSRAKTQEIRPLKVLVLNLMPKKIETENQFLRLLSNSPLQIDIQLLRIDSRESKNTPAEHLNNFYCDFEDIQEQNFDGLIVTGAPLGLVDFCDVAYWPQIERIIAWAKDHVTSTLFVCWAVQAALNILYGIPKMTRETKLSGIYQHQTDKPLALLTRGFDETFLAPHSRYADFPVELLQQYTDLDILVSSEEAGAYLFASKDKRVAFVTGHPEYDVDTLAGEYQRDLAAGLNPQIPLNYFPNDDASLPPKASWRSHGHLLFANWLNYYVYQITPFDLRHMNPTLD.

C142 functions as the Acyl-thioester intermediate in the catalytic mechanism. Residues K163 and S192 each contribute to the substrate site. H235 acts as the Proton acceptor in catalysis. E237 is a catalytic residue. A substrate-binding site is contributed by R249.

This sequence belongs to the MetA family.

The protein localises to the cytoplasm. The enzyme catalyses L-homoserine + succinyl-CoA = O-succinyl-L-homoserine + CoA. Its pathway is amino-acid biosynthesis; L-methionine biosynthesis via de novo pathway; O-succinyl-L-homoserine from L-homoserine: step 1/1. Transfers a succinyl group from succinyl-CoA to L-homoserine, forming succinyl-L-homoserine. In Yersinia enterocolitica serotype O:8 / biotype 1B (strain NCTC 13174 / 8081), this protein is Homoserine O-succinyltransferase.